Here is a 282-residue protein sequence, read N- to C-terminus: Bifunctional protein FolD (282 aa).

NADP(+)-binding positions include 164-166 (GRS) and Ser-189.

Belongs to the tetrahydrofolate dehydrogenase/cyclohydrolase family. As to quaternary structure, homodimer.

The catalysed reaction is (6R)-5,10-methylene-5,6,7,8-tetrahydrofolate + NADP(+) = (6R)-5,10-methenyltetrahydrofolate + NADPH. It carries out the reaction (6R)-5,10-methenyltetrahydrofolate + H2O = (6R)-10-formyltetrahydrofolate + H(+). Its pathway is one-carbon metabolism; tetrahydrofolate interconversion. Its function is as follows. Catalyzes the oxidation of 5,10-methylenetetrahydrofolate to 5,10-methenyltetrahydrofolate and then the hydrolysis of 5,10-methenyltetrahydrofolate to 10-formyltetrahydrofolate. The polypeptide is Bifunctional protein FolD (Lactobacillus helveticus (strain DPC 4571)).